The following is a 196-amino-acid chain: Somatotropin (196 aa).

Positions 1 to 18 (MEKVVLLLSVLSLGVVCP) are cleaved as a signal peptide. Gln19 carries the pyrrolidone carboxylic acid modification. His35 is a binding site for Zn(2+). The cysteines at positions 69 and 169 are disulfide-linked. Zn(2+) is bound at residue Glu178. Residues Cys186 and Cys194 are joined by a disulfide bond.

It belongs to the somatotropin/prolactin family.

The protein resides in the secreted. Growth hormone plays an important role in growth control and is involved in the regulation of several anabolic processes. Implicated as an osmoregulatory substance important for seawater adaptation. This chain is Somatotropin (gh), found in Siganus guttatus (Orange-spotted spinefoot).